We begin with the raw amino-acid sequence, 595 residues long: Protein kinase C iota type (595 aa).

Positions 1–12 (MPTQRDSSTMSH) are enriched in polar residues. A disordered region spans residues 1 to 21 (MPTQRDSSTMSHTVACGGGGD). Position 2 is an N-acetylproline (Pro2). A required for interaction with RAB2 region spans residues 2-28 (PTQRDSSTMSHTVACGGGGDHSHQVRV). Residues 2 to 252 (PTQRDSSTMS…KASSSLGLQD (251 aa)) are regulatory domain. Thr3 carries the phosphothreonine modification. Ser7 and Ser8 each carry phosphoserine. A Phosphothreonine modification is found at Thr9. The PB1 domain maps to 25 to 108 (QVRVKAYYRG…SELLIHVFPC (84 aa)). An interaction with PARD6A region spans residues 72–91 (DEEGDPCTVSSQLELEEAFR). Positions 125-134 (YRRGARRWRK) match the Pseudosubstrate motif. The Phorbol-ester/DAG-type zinc-finger motif lies at 140–190 (GHTFQAKRFNRRAHCAICTDRIWGLGRQGYKCINCKLLVHKKCHKLVTIEC). The Protein kinase domain occupies 253–521 (FDLLRVIGRG…FADIQGHPFF (269 aa)). 259-267 (IGRGSYAKV) contributes to the ATP binding site. A phosphotyrosine; by SRC mark is found at Tyr264 and Tyr279. ATP is bound at residue Lys282. Tyr333 is modified (phosphotyrosine; by SRC). Catalysis depends on Asp377, which acts as the Proton acceptor. Thr411 and Thr563 each carry phosphothreonine. The AGC-kinase C-terminal domain occupies 522-593 (RNVDWDMMEQ…INPLLMSAEE (72 aa)).

Belongs to the protein kinase superfamily. AGC Ser/Thr protein kinase family. PKC subfamily. As to quaternary structure, forms a complex with SQSTM1 and MP2K5. Interacts directly with SQSTM1. Interacts with IKBKB. Interacts with PARD6A, PARD6B and PARD6G. Part of a quaternary complex containing aPKC, PARD3, a PARD6 protein (PARD6A, PARD6B or PARD6G) and a GTPase protein (CDC42 or RAC1). Part of a complex with LLGL1 and PARD6B. Interacts with ADAP1/CENTA1. Interaction with SMG1, through the ZN-finger domain, activates the kinase activity. Interacts with CDK7. Forms a complex with RAB2A and GAPDH involved in recruitment onto the membrane of vesicular tubular clusters (VTCs). Interacts with ECT2 ('Thr-359' phosphorylated form). Interacts with VAMP2. Interacts with WDFY2 (via WD repeats 1-3). In terms of processing, phosphorylation at Thr-411 in the activation loop is not mandatory for activation. Upon neuronal growth factor (NGF) stimulation, phosphorylated by SRC at Tyr-264, Tyr-279 and Tyr-333. Phosphorylation on Tyr-264 facilitates binding to KPNB1/importin-beta regulating entry of PRKCI into the nucleus. Phosphorylation on Tyr-333 is important for NF-kappa-B stimulation. Phosphorylated at Thr-563 during the initial phase of long term potentiation.

Its subcellular location is the cytoplasm. It localises to the membrane. The protein resides in the endosome. It is found in the nucleus. The enzyme catalyses L-seryl-[protein] + ATP = O-phospho-L-seryl-[protein] + ADP + H(+). The catalysed reaction is L-threonyl-[protein] + ATP = O-phospho-L-threonyl-[protein] + ADP + H(+). With respect to regulation, atypical PKCs (PRKCI and PRKCZ) exhibit an elevated basal enzymatic activity (that may be due to the interaction with SMG1 or SQSTM1) and are not regulated by diacylglycerol, phosphatidylserine, phorbol esters or calcium ions. Two specific sites, Thr-411 (activation loop of the kinase domain) and Thr-563 (turn motif), need to be phosphorylated for its full activation. Might also be a target for novel lipid activators that are elevated during nutrient-stimulated insulin secretion. Calcium- and diacylglycerol-independent serine/ threonine-protein kinase that plays a general protective role against apoptotic stimuli, is involved in NF-kappa-B activation, cell survival, differentiation and polarity, and contributes to the regulation of microtubule dynamics in the early secretory pathway. Is necessary for BCR-ABL oncogene-mediated resistance to apoptotic drug in leukemia cells, protecting leukemia cells against drug-induced apoptosis. In cultured neurons, prevents amyloid beta protein-induced apoptosis by interrupting cell death process at a very early step. In glioblastoma cells, may function downstream of phosphatidylinositol 3-kinase (PI3K) and PDPK1 in the promotion of cell survival by phosphorylating and inhibiting the pro-apoptotic factor BAD. Can form a protein complex in non-small cell lung cancer (NSCLC) cells with PARD6A and ECT2 and regulate ECT2 oncogenic activity by phosphorylation, which in turn promotes transformed growth and invasion. In response to nerve growth factor (NGF), acts downstream of SRC to phosphorylate and activate IRAK1, allowing the subsequent activation of NF-kappa-B and neuronal cell survival. Functions in the organization of the apical domain in epithelial cells by phosphorylating EZR. This step is crucial for activation and normal distribution of EZR at the early stages of intestinal epithelial cell differentiation. Forms a protein complex with LLGL1 and PARD6B independently of PARD3 to regulate epithelial cell polarity. Plays a role in microtubule dynamics in the early secretory pathway through interaction with RAB2A and GAPDH and recruitment to vesicular tubular clusters (VTCs). In human coronary artery endothelial cells (HCAEC), is activated by saturated fatty acids and mediates lipid-induced apoptosis. Downstream of PI3K is required for insulin-stimulated glucose transport. Activates RAB4A and promotes its association with KIF3A which is required for the insulin-induced SLC2A4/GLUT4 translocation in adipocytes. Is essential in early embryogenesis and development of differentiating photoreceptors by playing a role in the establishment of epithelial and neuronal polarity. Involved in early synaptic long term potentiation phase in CA1 hippocampal cells and short term memory formation. This is Protein kinase C iota type (Prkci) from Mus musculus (Mouse).